Consider the following 354-residue polypeptide: NADH-quinone oxidoreductase subunit H (354 aa).

Transmembrane regions (helical) follow at residues 25–45, 91–111, 126–146, 170–190, 205–225, 267–287, 290–310, and 330–350; these read LVRI…LILW, WIYM…WAVI, LLYA…AGWA, MGFA…SGIV, FLSW…ISGI, IVIS…PFGF, FIPG…VFIW, and IFIP…MSPL.

The protein belongs to the complex I subunit 1 family. NDH-1 is composed of 14 different subunits. Subunits NuoA, H, J, K, L, M, N constitute the membrane sector of the complex.

The protein localises to the cell inner membrane. The catalysed reaction is a quinone + NADH + 5 H(+)(in) = a quinol + NAD(+) + 4 H(+)(out). Its function is as follows. NDH-1 shuttles electrons from NADH, via FMN and iron-sulfur (Fe-S) centers, to quinones in the respiratory chain. The immediate electron acceptor for the enzyme in this species is believed to be ubiquinone. Couples the redox reaction to proton translocation (for every two electrons transferred, four hydrogen ions are translocated across the cytoplasmic membrane), and thus conserves the redox energy in a proton gradient. This subunit may bind ubiquinone. The sequence is that of NADH-quinone oxidoreductase subunit H from Paraburkholderia xenovorans (strain LB400).